Reading from the N-terminus, the 479-residue chain is Lincomycin resistance protein LmrB (479 aa).

14 helical membrane passes run 19-41 (MISL…IALT), 56-78 (WLTT…LLQW), 85-107 (FTVS…SFSF), 112-134 (RIVQ…LVIF), 141-160 (AAMG…GPTF), 170-192 (WHWI…IAYM), 205-222 (VLSI…VFGF), 232-251 (WSSP…LILF), 272-294 (MFIL…MLLL), 304-326 (LTAF…MSPV), 338-355 (WLVI…WFFS), 360-382 (TSTA…MIMM), 403-425 (IMNT…IMAA), and 449-471 (AGVQ…GAFF).

It belongs to the major facilitator superfamily. EmrB family.

The protein resides in the cell membrane. Functionally, proton-dependent transporter. May mediate the efflux of lincomycin. This Bacillus subtilis (strain 168) protein is Lincomycin resistance protein LmrB (lmrB).